A 405-amino-acid chain; its full sequence is Aspartokinase (405 aa).

ACT domains are found at residues 267–344 and 345–405; these read VSME…AKVS and IVGV…QLDQ.

This sequence belongs to the aspartokinase family.

It carries out the reaction L-aspartate + ATP = 4-phospho-L-aspartate + ADP. It functions in the pathway amino-acid biosynthesis; L-lysine biosynthesis via DAP pathway; (S)-tetrahydrodipicolinate from L-aspartate: step 1/4. It participates in amino-acid biosynthesis; L-methionine biosynthesis via de novo pathway; L-homoserine from L-aspartate: step 1/3. Its pathway is amino-acid biosynthesis; L-threonine biosynthesis; L-threonine from L-aspartate: step 1/5. The sequence is that of Aspartokinase (lysC) from Helicobacter pylori (strain ATCC 700392 / 26695) (Campylobacter pylori).